A 146-amino-acid chain; its full sequence is Large ribosomal subunit protein bL19 (146 aa).

The protein belongs to the bacterial ribosomal protein bL19 family.

This protein is located at the 30S-50S ribosomal subunit interface and may play a role in the structure and function of the aminoacyl-tRNA binding site. This Bartonella henselae (strain ATCC 49882 / DSM 28221 / CCUG 30454 / Houston 1) (Rochalimaea henselae) protein is Large ribosomal subunit protein bL19.